Reading from the N-terminus, the 1499-residue chain is ABC multidrug transporter A-2 (1499 aa).

Disordered stretches follow at residues 1–66 (MAMQ…IDQE) and 80–107 (QISQ…NSDK). Over residues 16–30 (ISSSAGQEVASTIRR) the composition is skewed to polar residues. The span at 31 to 51 (QFTDADADRIVETPLGEKADS) shows a compositional bias: basic and acidic residues. Residues 80–94 (QISQKSAGPTNTFLD) show a composition bias toward polar residues. One can recognise an ABC transporter 1 domain in the interval 166–415 (LRSILGCRNR…FIDMGFDCPD (250 aa)). The N-linked (GlcNAc...) asparagine glycan is linked to Asn-339. 5 helical membrane passes run 526-546 (MTLA…SVFY), 561-581 (LLFF…LTLW), 606-626 (MIVD…ILYF), 635-655 (GHFF…SNIF), and 669-689 (MVPS…TIPV). A glycan (N-linked (GlcNAc...) asparagine) is linked at Asn-763. The chain crosses the membrane as a helical span at residues 778–798 (GIILGFFFFFLAAYIICSELV). In terms of domain architecture, ABC transporter 2 spans 857 to 1100 (FHWQDVCYDI…LIKYFENKGS (244 aa)). 893–900 (GVTGAGKT) is a binding site for ATP. The next 5 helical transmembrane spans lie at 1193–1213 (YIYS…FTFW), 1227–1247 (FAIF…MPYF), 1268–1288 (AFML…AVPA), 1317–1337 (LLIL…IAGI), and 1353–1373 (LCLI…FWIF). Residue Asn-1414 is glycosylated (N-linked (GlcNAc...) asparagine). The helical transmembrane segment at 1466-1486 (GLLFVYIVFNIFAAIFLYWLI) threads the bilayer.

This sequence belongs to the ABC transporter superfamily. ABCG family. PDR (TC 3.A.1.205) subfamily.

The protein localises to the cell membrane. The catalysed reaction is itraconazole(in) + ATP + H2O = itraconazole(out) + ADP + phosphate + H(+). It catalyses the reaction voriconazole(in) + ATP + H2O = voriconazole(out) + ADP + phosphate + H(+). With respect to regulation, the efflux inhibitor FK506 impairs the transport activity. Its function is as follows. Pleiotropic ABC efflux transporter that confers resistance to structurally and functionally unrelated compounds including azoles such as itraconazole, posaconazole, and voriconazole. The protein is ABC multidrug transporter A-2 of Aspergillus fumigatus (strain ATCC MYA-4609 / CBS 101355 / FGSC A1100 / Af293) (Neosartorya fumigata).